Reading from the N-terminus, the 443-residue chain is MRPWVPVTGASPHAAVGPAWTTGRRCVGVVTTWWWSVSYVERQVQIIDSLYRAMDASAENGYTDAACRFRYLPEEDGSLGIDSSFFYTIGGVSVSALLNDYGDKGCADLVYDLHDVMYKDIRFGESIRSRMCPRGVNPVPSAPTAPPAGLAAFPSANRRTERCLVWIACVHRLSAVGEAGSLNEPEAARLANDPAEHSNRHVDALGRQQLVCAHVVAGVASDGFGVRAGEERTGARGRHSGSIKPLDNLVVETPIEAARSRHRCAGRPCPRRHRRPCNASKSHRPMRMQQRDRGWTVWQKDFSMLTPLSAGFQHRVLAQQLVARRGRMQPSVVQIGVGRIRADVAGRVAGQDALGRIGRILPNAVARLSIAVRFLRAQSINHSIQSKRDRRSWNGCSKGQRRRGFISIDKKPGPKNKLALMFIREPDRFISIDRNPARRTSWL.

Basic residues predominate over residues arginine 263 to methionine 286. Positions arginine 263–aspartate 292 are disordered.

To mammalian CGHB.

Its subcellular location is the secreted. The protein localises to the cell wall. Functionally, cell wall protein that resembles the beta subunit of human chorionic gonadotropin. Stimulates growth and change in morphology. The sequence is that of Chorionicgonadotropic hormone-like protein (xcg) from Stenotrophomonas maltophilia (Pseudomonas maltophilia).